Here is a 163-residue protein sequence, read N- to C-terminus: Shikimate kinase (163 aa).

10–15 lines the ATP pocket; the sequence is GVGKTT. Thr-14 contributes to the Mg(2+) binding site. The substrate site is built by Asp-28, Arg-52, and Gly-75. Arg-116 is an ATP binding site. Residue Arg-134 coordinates substrate. ATP is bound at residue Arg-151.

It belongs to the shikimate kinase family. Monomer. It depends on Mg(2+) as a cofactor.

It localises to the cytoplasm. The enzyme catalyses shikimate + ATP = 3-phosphoshikimate + ADP + H(+). It functions in the pathway metabolic intermediate biosynthesis; chorismate biosynthesis; chorismate from D-erythrose 4-phosphate and phosphoenolpyruvate: step 5/7. Catalyzes the specific phosphorylation of the 3-hydroxyl group of shikimic acid using ATP as a cosubstrate. The protein is Shikimate kinase of Streptococcus pyogenes serotype M49 (strain NZ131).